The chain runs to 151 residues: MNSSALPHVTIFTDGACSGNPGPGGWGAILRFGEIEKELKGGEPHTTNNRMELLAAISALEALKKAASVDLTTDSQYVRQGITSWIHNWKRNGWRTADKKPVKNADLWQRLDTALQPHQVRWHWIKGHAGHDENERADQLAREGVALARLK.

Residues 5-146 form the RNase H type-1 domain; the sequence is ALPHVTIFTD…ADQLAREGVA (142 aa). 4 residues coordinate Mg(2+): Asp14, Glu52, Asp74, and Asp138.

This sequence belongs to the RNase H family. As to quaternary structure, monomer. It depends on Mg(2+) as a cofactor.

The protein localises to the cytoplasm. The catalysed reaction is Endonucleolytic cleavage to 5'-phosphomonoester.. Its function is as follows. Endonuclease that specifically degrades the RNA of RNA-DNA hybrids. The sequence is that of Ribonuclease H from Nitrobacter hamburgensis (strain DSM 10229 / NCIMB 13809 / X14).